Consider the following 437-residue polypeptide: Bystin (437 aa).

Residues 1-105 (MPKFKAARGV…DGSDDEDEEW (105 aa)) are disordered. Omega-N-methylarginine is present on R40. Residue S55 is modified to Phosphoserine. Residues 71–87 (AEHGTGDKPAAPRERTT) show a composition bias toward basic and acidic residues. At S98 the chain carries Phosphoserine. Phosphothreonine is present on T156. 2 positions are modified to phosphoserine: S167 and S414.

It belongs to the bystin family. As to quaternary structure, binds trophinin, tastin and cytokeratins. As to expression, found in the placenta from the sixth week of pregnancy. Was localized in the cytoplasm of the syncytiotrophoblast in the chorionic villi and in endometrial decidual cells at the uteroplacental interface. After week 10, the level decreased and then disappeared from placental villi.

The protein localises to the cytoplasm. Its subcellular location is the nucleus. It is found in the nucleolus. Functionally, required for processing of 20S pre-rRNA precursor and biogenesis of 40S ribosomal subunits. May be required for trophinin-dependent regulation of cell adhesion during implantation of human embryos. This Homo sapiens (Human) protein is Bystin.